The chain runs to 290 residues: Phosphatidylglycerol--prolipoprotein diacylglyceryl transferase (290 aa).

A run of 7 helical transmembrane segments spans residues valine 21 to alanine 41, leucine 60 to tyrosine 80, tryptophan 96 to phenylalanine 116, phenylalanine 124 to leucine 144, serine 199 to isoleucine 219, glycine 226 to phenylalanine 246, and isoleucine 260 to tryptophan 280. An a 1,2-diacyl-sn-glycero-3-phospho-(1'-sn-glycerol)-binding site is contributed by arginine 143.

It belongs to the Lgt family.

It is found in the cell inner membrane. It catalyses the reaction L-cysteinyl-[prolipoprotein] + a 1,2-diacyl-sn-glycero-3-phospho-(1'-sn-glycerol) = an S-1,2-diacyl-sn-glyceryl-L-cysteinyl-[prolipoprotein] + sn-glycerol 1-phosphate + H(+). It functions in the pathway protein modification; lipoprotein biosynthesis (diacylglyceryl transfer). Functionally, catalyzes the transfer of the diacylglyceryl group from phosphatidylglycerol to the sulfhydryl group of the N-terminal cysteine of a prolipoprotein, the first step in the formation of mature lipoproteins. This is Phosphatidylglycerol--prolipoprotein diacylglyceryl transferase from Yersinia pseudotuberculosis serotype O:1b (strain IP 31758).